Here is a 183-residue protein sequence, read N- to C-terminus: Peptidyl-tRNA hydrolase (183 aa).

Tyr-14 lines the tRNA pocket. His-19 functions as the Proton acceptor in the catalytic mechanism. TRNA contacts are provided by Phe-64 and Asn-66.

This sequence belongs to the PTH family. As to quaternary structure, monomer.

It is found in the cytoplasm. The enzyme catalyses an N-acyl-L-alpha-aminoacyl-tRNA + H2O = an N-acyl-L-amino acid + a tRNA + H(+). Functionally, hydrolyzes ribosome-free peptidyl-tRNAs (with 1 or more amino acids incorporated), which drop off the ribosome during protein synthesis, or as a result of ribosome stalling. Its function is as follows. Catalyzes the release of premature peptidyl moieties from peptidyl-tRNA molecules trapped in stalled 50S ribosomal subunits, and thus maintains levels of free tRNAs and 50S ribosomes. The sequence is that of Peptidyl-tRNA hydrolase from Syntrophomonas wolfei subsp. wolfei (strain DSM 2245B / Goettingen).